The primary structure comprises 117 residues: UPF0102 protein RHOS4_03930 (117 aa).

It belongs to the UPF0102 family.

The polypeptide is UPF0102 protein RHOS4_03930 (Cereibacter sphaeroides (strain ATCC 17023 / DSM 158 / JCM 6121 / CCUG 31486 / LMG 2827 / NBRC 12203 / NCIMB 8253 / ATH 2.4.1.) (Rhodobacter sphaeroides)).